Reading from the N-terminus, the 383-residue chain is MKRLTLLGSTGSIGVNTLKVVSRFCDRFSVEALCARGSVDTLAEQVQRFSPSLAVVIDAPTAQALKERLPAGSRTEVLFGEAGYCHAVSLPGVDMVVSAMVGAAGLGPTIAAIKAGKAVALANKEVLVMAGETVMALAAQKGVPLLPIDSEHSAIFQCLQGNDKTFLSKIHLTASGGPFLNKTRQEIETATPEQALAHPTWTMGKKISIDSATLMNKGLEVIEARFLFDVPADCIEVVVHPQSIIHSMVSYIDGSMMAQLSVPDMKGAIAYALSYPERLDLNQPAPDLAALEQLTFFSPDLDRFPCLGLAFEACRRKKTFPAVLNAANEVAVDAFLREAIPFGRIPRVIEQVLAEHTGVTDPSLSDIKDADAWARQRAGALLP.

Thr-10, Gly-11, Ser-12, Ile-13, and Asn-123 together coordinate NADPH. Lys-124 contacts 1-deoxy-D-xylulose 5-phosphate. Glu-125 contacts NADPH. Asp-149 contacts Mn(2+). 4 residues coordinate 1-deoxy-D-xylulose 5-phosphate: Ser-150, Glu-151, Ser-175, and His-198. Glu-151 is a Mn(2+) binding site. Gly-204 is an NADPH binding site. 1-deoxy-D-xylulose 5-phosphate is bound by residues Ser-211, Asn-216, Lys-217, and Glu-220. Glu-220 is a binding site for Mn(2+).

It belongs to the DXR family. It depends on Mg(2+) as a cofactor. Mn(2+) serves as cofactor.

It catalyses the reaction 2-C-methyl-D-erythritol 4-phosphate + NADP(+) = 1-deoxy-D-xylulose 5-phosphate + NADPH + H(+). Its pathway is isoprenoid biosynthesis; isopentenyl diphosphate biosynthesis via DXP pathway; isopentenyl diphosphate from 1-deoxy-D-xylulose 5-phosphate: step 1/6. In terms of biological role, catalyzes the NADPH-dependent rearrangement and reduction of 1-deoxy-D-xylulose-5-phosphate (DXP) to 2-C-methyl-D-erythritol 4-phosphate (MEP). The chain is 1-deoxy-D-xylulose 5-phosphate reductoisomerase from Desulfosudis oleivorans (strain DSM 6200 / JCM 39069 / Hxd3) (Desulfococcus oleovorans).